A 639-amino-acid chain; its full sequence is Chaperone protein DnaK (639 aa).

Phosphothreonine; by autocatalysis is present on threonine 198. A compositionally biased stretch (low complexity) spans 603 to 618 (AKAQTQGGAQEGAAKQ). The interval 603 to 639 (AKAQTQGGAQEGAAKQSNATADDVVDAEFEEVKDDKK) is disordered. Over residues 625–639 (DVVDAEFEEVKDDKK) the composition is skewed to acidic residues.

This sequence belongs to the heat shock protein 70 family.

Acts as a chaperone. In Shewanella sp. (strain MR-7), this protein is Chaperone protein DnaK.